Reading from the N-terminus, the 84-residue chain is Large ribosomal subunit protein uL23 (84 aa).

The protein belongs to the universal ribosomal protein uL23 family. Part of the 50S ribosomal subunit. Contacts protein L29.

In terms of biological role, binds to 23S rRNA. One of the proteins that surrounds the polypeptide exit tunnel on the outside of the ribosome. This is Large ribosomal subunit protein uL23 from Haloquadratum walsbyi (strain DSM 16790 / HBSQ001).